Reading from the N-terminus, the 440-residue chain is C4-dicarboxylate transport protein (440 aa).

Transmembrane regions (helical) follow at residues valine 15–alanine 35, leucine 46–methionine 66, tyrosine 78–valine 98, alanine 146–leucine 166, isoleucine 190–isoleucine 210, leucine 224–cysteine 244, valine 291–leucine 311, isoleucine 332–glycine 352, and isoleucine 354–isoleucine 374. Residues glycine 419–arginine 440 form a disordered region.

It belongs to the dicarboxylate/amino acid:cation symporter (DAACS) (TC 2.A.23) family.

It localises to the cell inner membrane. Functionally, responsible for the transport of dicarboxylates such as succinate, fumarate, and malate from the periplasm across the membrane. This chain is C4-dicarboxylate transport protein, found in Pseudomonas entomophila (strain L48).